The following is a 160-amino-acid chain: Small ribosomal subunit protein uS7 (160 aa).

This sequence belongs to the universal ribosomal protein uS7 family. In terms of assembly, part of the 30S ribosomal subunit. Contacts proteins S9 and S11.

One of the primary rRNA binding proteins, it binds directly to 16S rRNA where it nucleates assembly of the head domain of the 30S subunit. Is located at the subunit interface close to the decoding center, probably blocks exit of the E-site tRNA. The protein is Small ribosomal subunit protein uS7 of Ehrlichia ruminantium (strain Gardel).